Consider the following 248-residue polypeptide: MDSKRAMVLRMEGTNNEEEAFLSLKRAGFEPEYVHINDLARKRKFIDDYNLMFIPGGFSAGDYIRAGAIFAARLRPFLSDINKFIDSGRFIIGVCNGFQVLTELGLFFNGDRKIALTVNESNRFECRFTYIRLSTKKVLSGLGNRPFQVPVAHLEGRVYCDNKTLDELIENDQIIFRYVDNNGNYSGYPWNPNGSIMNIAGITNDSGNVIGMMPHPERVYYPYQMSGNERNSDKGTGEIFFRILYNST.

The Glutamine amidotransferase type-1 domain maps to 6 to 248 (AMVLRMEGTN…IFFRILYNST (243 aa)). The active-site Nucleophile is C95. Active-site residues include H215 and E217.

In terms of assembly, part of the FGAM synthase complex composed of 1 PurL, 1 PurQ and 2 PurS subunits.

It is found in the cytoplasm. The catalysed reaction is N(2)-formyl-N(1)-(5-phospho-beta-D-ribosyl)glycinamide + L-glutamine + ATP + H2O = 2-formamido-N(1)-(5-O-phospho-beta-D-ribosyl)acetamidine + L-glutamate + ADP + phosphate + H(+). It catalyses the reaction L-glutamine + H2O = L-glutamate + NH4(+). The protein operates within purine metabolism; IMP biosynthesis via de novo pathway; 5-amino-1-(5-phospho-D-ribosyl)imidazole from N(2)-formyl-N(1)-(5-phospho-D-ribosyl)glycinamide: step 1/2. In terms of biological role, part of the phosphoribosylformylglycinamidine synthase complex involved in the purines biosynthetic pathway. Catalyzes the ATP-dependent conversion of formylglycinamide ribonucleotide (FGAR) and glutamine to yield formylglycinamidine ribonucleotide (FGAM) and glutamate. The FGAM synthase complex is composed of three subunits. PurQ produces an ammonia molecule by converting glutamine to glutamate. PurL transfers the ammonia molecule to FGAR to form FGAM in an ATP-dependent manner. PurS interacts with PurQ and PurL and is thought to assist in the transfer of the ammonia molecule from PurQ to PurL. This is Phosphoribosylformylglycinamidine synthase subunit PurQ from Picrophilus torridus (strain ATCC 700027 / DSM 9790 / JCM 10055 / NBRC 100828 / KAW 2/3).